The chain runs to 313 residues: MNVSNAPRFNLLTILGPTASGKTRLAVNLARELGGEIISADSRQVFRRMDIGTGKDLHEYGEVHHHLIDILEPGEEFSVFAFQRLFLEAVGDICGRGRLPLLCGGTGMYLDAALRRYRMHEVPEDREWRASLEGVGDGELASRLREFRPGLHNSTDLVDRQRTIRALEIARFQADCAGDDEPFPDLRPLVIGIRWERAELRRRITERLRQRLESGMIEEVRRLNDGGVPWERLDYYGLEYRFVGMYLRDELSRNDLFQKLNSAIHDFAKRQETWFRRMERNGVAINWVDGGGGPLSEARRVILDNSYHLATGR.

16–23 (GPTASGKT) contacts ATP. 18–23 (TASGKT) contributes to the substrate binding site. 2 interaction with substrate tRNA regions span residues 41–44 (DSRQ) and 161–165 (QRTIR).

It belongs to the IPP transferase family. As to quaternary structure, monomer. Mg(2+) serves as cofactor.

The enzyme catalyses adenosine(37) in tRNA + dimethylallyl diphosphate = N(6)-dimethylallyladenosine(37) in tRNA + diphosphate. Its function is as follows. Catalyzes the transfer of a dimethylallyl group onto the adenine at position 37 in tRNAs that read codons beginning with uridine, leading to the formation of N6-(dimethylallyl)adenosine (i(6)A). This Pelobacter propionicus (strain DSM 2379 / NBRC 103807 / OttBd1) protein is tRNA dimethylallyltransferase 2.